Here is a 325-residue protein sequence, read N- to C-terminus: Anthranilate phosphoribosyltransferase (325 aa).

5-phospho-alpha-D-ribose 1-diphosphate-binding positions include glycine 74, 77-78 (GD), threonine 82, 84-87 (NVST), 101-109 (KHGNVSITS), and serine 113. Glycine 74 lines the anthranilate pocket. Serine 86 contacts Mg(2+). Residue asparagine 104 participates in anthranilate binding. Residue arginine 159 participates in anthranilate binding. Mg(2+) contacts are provided by aspartate 217 and glutamate 218.

Belongs to the anthranilate phosphoribosyltransferase family. In terms of assembly, homodimer. It depends on Mg(2+) as a cofactor.

It catalyses the reaction N-(5-phospho-beta-D-ribosyl)anthranilate + diphosphate = 5-phospho-alpha-D-ribose 1-diphosphate + anthranilate. The protein operates within amino-acid biosynthesis; L-tryptophan biosynthesis; L-tryptophan from chorismate: step 2/5. Its function is as follows. Catalyzes the transfer of the phosphoribosyl group of 5-phosphorylribose-1-pyrophosphate (PRPP) to anthranilate to yield N-(5'-phosphoribosyl)-anthranilate (PRA). The polypeptide is Anthranilate phosphoribosyltransferase (Thermococcus kodakarensis (strain ATCC BAA-918 / JCM 12380 / KOD1) (Pyrococcus kodakaraensis (strain KOD1))).